Reading from the N-terminus, the 253-residue chain is Ubiquinone/menaquinone biosynthesis C-methyltransferase UbiE (253 aa).

Residues threonine 76, aspartate 97, 125–126, and serine 142 each bind S-adenosyl-L-methionine; that span reads NA.

It belongs to the class I-like SAM-binding methyltransferase superfamily. MenG/UbiE family.

The catalysed reaction is a 2-demethylmenaquinol + S-adenosyl-L-methionine = a menaquinol + S-adenosyl-L-homocysteine + H(+). It catalyses the reaction a 2-methoxy-6-(all-trans-polyprenyl)benzene-1,4-diol + S-adenosyl-L-methionine = a 5-methoxy-2-methyl-3-(all-trans-polyprenyl)benzene-1,4-diol + S-adenosyl-L-homocysteine + H(+). Its pathway is quinol/quinone metabolism; menaquinone biosynthesis; menaquinol from 1,4-dihydroxy-2-naphthoate: step 2/2. It participates in cofactor biosynthesis; ubiquinone biosynthesis. In terms of biological role, methyltransferase required for the conversion of demethylmenaquinol (DMKH2) to menaquinol (MKH2) and the conversion of 2-polyprenyl-6-methoxy-1,4-benzoquinol (DDMQH2) to 2-polyprenyl-3-methyl-6-methoxy-1,4-benzoquinol (DMQH2). The polypeptide is Ubiquinone/menaquinone biosynthesis C-methyltransferase UbiE (Xylella fastidiosa (strain 9a5c)).